Here is an 805-residue protein sequence, read N- to C-terminus: Na(+)/H(+) antiporter subunit A1 (805 aa).

20 helical membrane passes run 1–21 (MSLL…IPFV), 30–50 (LGWF…SYIS), 79–99 (LGLL…LYSI), 117–137 (LFMG…LYLF), 166–186 (MLVT…LSIA), 201–221 (EIQT…GAMT), 226–246 (FPFY…SAYL), 265–285 (IFAV…ITLF), 300–320 (ILAF…GVGA), 337–357 (FTAA…LFMI), 377–397 (LTIM…MAGI), 427–447 (LGIL…VYSI), 480–500 (ILAI…GSII), 531–551 (LGIY…IYLL), 591–611 (LVII…VTPF), 623–643 (PFEL…IFAK), 646–666 (LFSI…FIFF), 671–691 (LALT…LCFY), 707–727 (LVNI…GLIA), and 766–786 (TLFE…MIKL).

It belongs to the CPA3 antiporters (TC 2.A.63) subunit A family. In terms of assembly, may form a heterooligomeric complex that consists of seven subunits: mnhA1, mnhB1, mnhC1, mnhD1, mnhE1, mnhF1 and mnhG1.

It localises to the cell membrane. Functionally, mnh complex is a Na(+)/H(+) antiporter involved in Na(+) excretion. In Staphylococcus saprophyticus subsp. saprophyticus (strain ATCC 15305 / DSM 20229 / NCIMB 8711 / NCTC 7292 / S-41), this protein is Na(+)/H(+) antiporter subunit A1 (mnhA1).